We begin with the raw amino-acid sequence, 217 residues long: Adapter protein MecA (217 aa).

This sequence belongs to the MecA family. Homodimer.

In terms of biological role, enables the recognition and targeting of unfolded and aggregated proteins to the ClpC protease or to other proteins involved in proteolysis. The polypeptide is Adapter protein MecA (Listeria welshimeri serovar 6b (strain ATCC 35897 / DSM 20650 / CCUG 15529 / CIP 8149 / NCTC 11857 / SLCC 5334 / V8)).